The sequence spans 511 residues: Kinesin-like protein 8 (511 aa).

Residues 5 to 356 (NVRVIVRVRP…LRYSEAARRI (352 aa)) form the Kinesin motor domain. An ATP-binding site is contributed by 107–114 (GQKGTGKT). Serine 278, serine 279, serine 284, and serine 456 each carry phosphoserine. Residues 373 to 489 (EGELDDILTT…KLVKSQLHDY (117 aa)) are a coiled coil.

This sequence belongs to the TRAFAC class myosin-kinesin ATPase superfamily. Kinesin family.

Its subcellular location is the cytoplasm. It localises to the cytoskeleton. The protein is Kinesin-like protein 8 (klp8) of Schizosaccharomyces pombe (strain 972 / ATCC 24843) (Fission yeast).